The chain runs to 426 residues: 3-phosphoshikimate 1-carboxyvinyltransferase (426 aa).

3 residues coordinate 3-phosphoshikimate: Lys-22, Ser-23, and Arg-27. Lys-22 serves as a coordination point for phosphoenolpyruvate. Residues Gly-96 and Arg-124 each contribute to the phosphoenolpyruvate site. 3-phosphoshikimate contacts are provided by Ser-170, Ser-171, Gln-172, Ser-198, Asp-314, Asn-337, and Lys-341. Gln-172 contacts phosphoenolpyruvate. Asp-314 serves as the catalytic Proton acceptor. Arg-345, Arg-387, and Lys-412 together coordinate phosphoenolpyruvate.

Belongs to the EPSP synthase family. As to quaternary structure, monomer.

The protein resides in the cytoplasm. The enzyme catalyses 3-phosphoshikimate + phosphoenolpyruvate = 5-O-(1-carboxyvinyl)-3-phosphoshikimate + phosphate. It functions in the pathway metabolic intermediate biosynthesis; chorismate biosynthesis; chorismate from D-erythrose 4-phosphate and phosphoenolpyruvate: step 6/7. In terms of biological role, catalyzes the transfer of the enolpyruvyl moiety of phosphoenolpyruvate (PEP) to the 5-hydroxyl of shikimate-3-phosphate (S3P) to produce enolpyruvyl shikimate-3-phosphate and inorganic phosphate. The polypeptide is 3-phosphoshikimate 1-carboxyvinyltransferase (Shewanella baltica (strain OS195)).